We begin with the raw amino-acid sequence, 2115 residues long: Non-reducing polyketide synthase PFUR17_0229 (2115 aa).

Residues 8–246 form an N-terminal acylcarrier protein transacylase (SAT) domain (SAT) region; sequence VLFGDQTVDP…ISLPITAAFH (239 aa). The Ketosynthase family 3 (KS3) domain maps to 367–796; that stretch reads SGDIAIVGVA…GGNTSLVLED (430 aa). Catalysis depends on for beta-ketoacyl synthase activity residues C539, H674, and H713. The malonyl-CoA:ACP transacylase (MAT) domain stretch occupies residues 895 to 1218; that stretch reads IFAFTGQGAQ…SISNAYNSGA (324 aa). A product template (PT) domain region spans residues 1279 to 1592; the sequence is TTCLQKVESE…KRNILQSLLS (314 aa). The segment at 1282–1413 is N-terminal hotdog fold; that stretch reads LQKVESETFT…CTVMYGDGQQ (132 aa). The 307-residue stretch at 1282-1588 folds into the PKS/mFAS DH domain; that stretch reads LQKVESETFT…FQKMKRNILQ (307 aa). H1315 functions as the Proton acceptor; for dehydratase activity in the catalytic mechanism. The interval 1441-1588 is C-terminal hotdog fold; the sequence is VHRLLKEMIY…FQKMKRNILQ (148 aa). Catalysis depends on D1501, which acts as the Proton donor; for dehydratase activity. The segment at 1594-1613 is disordered; that stretch reads GHEETPPARPVPSKRTVQGS. The Carrier 1 domain maps to 1626–1703; it reads KAASGGFSNI…QLRNFFLDKV (78 aa). S1663 bears the O-(pantetheine 4'-phosphoryl)serine mark. The interval 1710 to 1742 is disordered; the sequence is FDDEESEMSSSTAGSTPGSSTSHGNQNTTVTTP. Over residues 1718–1733 the composition is skewed to low complexity; the sequence is SSSTAGSTPGSSTSHG. Residues 1742-1819 enclose the Carrier 2 domain; sequence PAEPDVVAIL…DVQKALGVPS (78 aa). At S1779 the chain carries O-(pantetheine 4'-phosphoryl)serine. The interval 1861-2097 is thioesterase (TE) domain; that stretch reads LFLLPDGAGS…VVGGNHFSIM (237 aa).

Pantetheine 4'-phosphate is required as a cofactor.

The enzyme catalyses 6 malonyl-CoA + 2 acetyl-CoA + 5 H(+) = o-orsellinate depside + 6 CO2 + 8 CoA + H2O. In terms of biological role, non-reducing polyketide synthase; part of a gene cluster that mediates the biosynthesis of a yet unidentified depside/depsidone compound. The first step in the pathway is performed by the PKS PFUR17_0229 that condenses 2 acetyl-CoA starter units with 6 malonyl-CoA units to produce lecanoric acid (LA), also known as orsellinate depside. The biosynthesis occurs via the formation of 2 orsellinate intermediates fused together by the C-terminal thioesterase (TE) domain that finally releases lecanoric acid. In addition to the PKS gene, the PFUR17 gene cluster contains closely linked genes encoding a cytochrome P-450 and a laccase (phenol oxidase), directly upstream and downstream respectively, so it is likely that lecanoric acid is an intermediate in a longer biosynthetic pathway. The chain is Non-reducing polyketide synthase PFUR17_0229 from Pseudevernia furfuracea (Tree moss).